Consider the following 562-residue polypeptide: Potassium-transporting ATPase potassium-binding subunit (562 aa).

The next 12 helical transmembrane spans lie at 6 to 26, 62 to 82, 132 to 152, 175 to 195, 253 to 273, 283 to 303, 327 to 347, 356 to 376, 379 to 399, 416 to 436, 483 to 503, and 524 to 544; these read FLLI…LGGF, YALA…VLLM, GLTV…FALI, LYVL…QGVL, FVQM…FGQV, LIWA…YAEL, FGIL…CGAV, ALGG…FGGV, GLYG…LMIG, MTAL…ALAL, LLLA…VLAI, and GLLF…LTFI.

Belongs to the KdpA family. As to quaternary structure, the system is composed of three essential subunits: KdpA, KdpB and KdpC.

Its subcellular location is the cell inner membrane. In terms of biological role, part of the high-affinity ATP-driven potassium transport (or Kdp) system, which catalyzes the hydrolysis of ATP coupled with the electrogenic transport of potassium into the cytoplasm. This subunit binds the periplasmic potassium ions and delivers the ions to the membrane domain of KdpB through an intramembrane tunnel. The polypeptide is Potassium-transporting ATPase potassium-binding subunit (Yersinia pestis bv. Antiqua (strain Antiqua)).